A 595-amino-acid polypeptide reads, in one-letter code: Probable hydrolase M10 (595 aa).

The first 23 residues, Met1 to Thr23, serve as a signal peptide directing secretion. 6 N-linked (GlcNAc...) asparagine glycosylation sites follow: Asn59, Asn87, Asn266, Asn436, Asn457, and Asn561.

The protein belongs to the beta-lactamase family.

The protein operates within secondary metabolite biosynthesis. Its function is as follows. Probable hydrolase; part of the gene cluster that mediates the biosynthesis of squalestatin S1 (SQS1, also known as zaragozic acid A), a heavily oxidized fungal polyketide that offers potent cholesterol lowering activity by targeting squalene synthase (SS). SQS1 is composed of a 2,8-dioxobicyclic[3.2.1]octane-3,4,5-tricarboxyclic acid core that is connected to two lipophilic polyketide arms. These initial steps feature the priming of an unusual benzoic acid starter unit onto the highly reducing polyketide synthase pks2, followed by oxaloacetate extension and product release to generate a tricarboxylic acid containing product. The phenylalanine ammonia lyase (PAL) M7 and the acyl-CoA ligase M9 are involved in transforming phenylalanine into benzoyl-CoA. The citrate synthase-like protein R3 is involved in connecting the C-alpha-carbons of the hexaketide chain and oxaloacetate to afford the tricarboxylic acid unit. The potential hydrolytic enzymes, M8 and M10, are in close proximity to pks2 and may participate in product release. On the other side, the tetraketide arm is synthesized by a the squalestatin tetraketide synthase pks1 and enzymatically esterified to the core in the last biosynthetic step, by the acetyltransferase M4. The biosynthesis of the tetraketide must involve 3 rounds of chain extension. After the first and second rounds methyl-transfer occurs, and in all rounds of extension the ketoreductase and dehydratase are active. The enoyl reductase and C-MeT of pks1 are not active in the final round of extension. The acetyltransferase M4 appears to have a broad substrate selectivity for its acyl CoA substrate, allowing the in vitro synthesis of novel squalestatins. The biosynthesis of SQS1 requires several oxidative steps likely performed by oxidoreductases M1, R1 and R2. Finally, in support of the identification of the cluster as being responsible for SQS1 production, the cluster contains a gene encoding a putative squalene synthase (SS) R6, suggesting a likely mechanism for self-resistance. This Phoma sp. (strain ATCC 20986 / MF5453) protein is Probable hydrolase M10.